Here is a 298-residue protein sequence, read N- to C-terminus: 4-hydroxy-tetrahydrodipicolinate synthase (298 aa).

Position 48 (T48) interacts with pyruvate. The active-site Proton donor/acceptor is Y137. K166 functions as the Schiff-base intermediate with substrate in the catalytic mechanism. I207 provides a ligand contact to pyruvate.

It belongs to the DapA family. In terms of assembly, homotetramer; dimer of dimers.

It localises to the cytoplasm. The enzyme catalyses L-aspartate 4-semialdehyde + pyruvate = (2S,4S)-4-hydroxy-2,3,4,5-tetrahydrodipicolinate + H2O + H(+). Its pathway is amino-acid biosynthesis; L-lysine biosynthesis via DAP pathway; (S)-tetrahydrodipicolinate from L-aspartate: step 3/4. Catalyzes the condensation of (S)-aspartate-beta-semialdehyde [(S)-ASA] and pyruvate to 4-hydroxy-tetrahydrodipicolinate (HTPA). The polypeptide is 4-hydroxy-tetrahydrodipicolinate synthase (Campylobacter jejuni subsp. jejuni serotype O:6 (strain 81116 / NCTC 11828)).